Reading from the N-terminus, the 503-residue chain is TGF-beta receptor type-1 (503 aa).

Residues 1 to 29 (MEAAAAAPRRPQLLIVLVAAATLLPGAKA) form the signal peptide. The Extracellular segment spans residues 30 to 126 (LQCFCHLCTK…QSAGLGPVEL (97 aa)). Disulfide bonds link C32-C50, C34-C37, C44-C67, C82-C96, and C97-C102. Residue N41 is glycosylated (N-linked (GlcNAc...) asparagine). A helical membrane pass occupies residues 127–147 (AAVIAGPVCFVCIALMLMVYI). Topologically, residues 148–503 (CHNRTVIHHR…QLSQQEGIKM (356 aa)) are cytoplasmic. Phosphoserine is present on S165. In terms of domain architecture, GS spans 175 to 204 (TTLKDLIYDMTTSGSGSGLPLLVQRTIART). Phosphothreonine; by TGFBR2 occurs at positions 185 and 186. Residues S187, S189, and S191 each carry the phosphoserine; by TGFBR2 modification. An FKBP1A-binding motif is present at residues 193–194 (LP). Residues 205–495 (IVLQESIGKG…LRIKKTLSQL (291 aa)) form the Protein kinase domain. ATP is bound by residues 211–219 (IGKGRFGEV) and K232. Residue K268 forms a Glycyl lysine isopeptide (Lys-Gly) (interchain with G-Cter in ubiquitin) linkage. Catalysis depends on D333, which acts as the Proton acceptor. K391 participates in a covalent cross-link: Glycyl lysine isopeptide (Lys-Gly) (interchain with G-Cter in SUMO).

The protein belongs to the protein kinase superfamily. TKL Ser/Thr protein kinase family. TGFB receptor subfamily. Homodimer; in the endoplasmic reticulum but also at the cell membrane. Heterohexamer; TGFB1, TGFB2 and TGFB3 homodimeric ligands assemble a functional receptor composed of two TGFBR1 and TGFBR2 heterodimers to form a ligand-receptor heterohexamer. The respective affinity of TGBRB1 and TGFBR2 for the ligands may modulate the kinetics of assembly of the receptor and may explain the different biological activities of TGFB1, TGFB2 and TGFB3. Component of a complex composed of TSC22D1 (via N-terminus), TGFBR1 and TGFBR2; the interaction between TSC22D1 and TGFBR1 is inhibited by SMAD7 and promoted by TGFB1. Interacts with CD109; inhibits TGF-beta receptor activation in keratinocytes. Interacts with RBPMS. Interacts (unphosphorylated) with FKBP1A; prevents TGFBR1 phosphorylation by TGFBR2 and stabilizes it in the inactive conformation. Interacts with SMAD2, SMAD3 and ZFYVE9; ZFYVE9 recruits SMAD2 and SMAD3 to the TGF-beta receptor. Interacts with TRAF6 and MAP3K7; induces MAP3K7 activation by TRAF6. Interacts with PARD6A; involved in TGF-beta induced epithelial to mesenchymal transition. Interacts with NEDD4L. Interacts with SMAD7, SMURF1 and SMURF2; SMAD7 recruits NEDD4L, SMURF1 and SMURF2 to the TGF-beta receptor. Interacts with USP15 and VPS39. Interacts with SDCBP (via C-terminus). Interacts with CAV1 and this interaction is impaired in the presence of SDCBP. Interacts with APPL1; interaction is TGF beta dependent; mediates trafficking of the TGFBR1 from the endosomes to the nucleus via microtubules in a TRAF6-dependent manner. Interacts with GPR50; this interaction promotes the constitutive activation of SMAD signaling pathway. Mg(2+) is required as a cofactor. Requires Mn(2+) as cofactor. Post-translationally, phosphorylated at basal levels in the absence of ligand. Activated upon phosphorylation by TGFBR2, mainly in the GS domain. Phosphorylation in the GS domain abrogates FKBP1A-binding. In terms of processing, N-Glycosylated. Ubiquitinated; undergoes ubiquitination catalyzed by several E3 ubiquitin ligases including SMURF1, SMURF2 and NEDD4L2. Results in the proteasomal and/or lysosomal degradation of the receptor thereby negatively regulating its activity. Deubiquitinated by USP15, leading to stabilization of the protein and enhanced TGF-beta signal. Its ubiquitination and proteasome-mediated degradation is negatively regulated by SDCBP. Ubiquitinated by BFAR via'Lys-63'-linked ubiquitination at Lys-268, leading to TGF-beta signaling activation.

It localises to the cell membrane. The protein localises to the cell junction. The protein resides in the tight junction. Its subcellular location is the membrane raft. It is found in the cell surface. The enzyme catalyses L-threonyl-[receptor-protein] + ATP = O-phospho-L-threonyl-[receptor-protein] + ADP + H(+). It catalyses the reaction L-seryl-[receptor-protein] + ATP = O-phospho-L-seryl-[receptor-protein] + ADP + H(+). Kept in an inactive conformation by FKBP1A preventing receptor activation in absence of ligand. CD109 is another inhibitor of the receptor. In terms of biological role, transmembrane serine/threonine kinase forming with the TGF-beta type II serine/threonine kinase receptor, TGFBR2, the non-promiscuous receptor for the TGF-beta cytokines TGFB1, TGFB2 and TGFB3. Transduces the TGFB1, TGFB2 and TGFB3 signal from the cell surface to the cytoplasm and is thus regulating a plethora of physiological and pathological processes including cell cycle arrest in epithelial and hematopoietic cells, control of mesenchymal cell proliferation and differentiation, wound healing, extracellular matrix production, immunosuppression and carcinogenesis. The formation of the receptor complex composed of 2 TGFBR1 and 2 TGFBR2 molecules symmetrically bound to the cytokine dimer results in the phosphorylation and the activation of TGFBR1 by the constitutively active TGFBR2. Activated TGFBR1 phosphorylates SMAD2 which dissociates from the receptor and interacts with SMAD4. The SMAD2-SMAD4 complex is subsequently translocated to the nucleus where it modulates the transcription of the TGF-beta-regulated genes. This constitutes the canonical SMAD-dependent TGF-beta signaling cascade. Also involved in non-canonical, SMAD-independent TGF-beta signaling pathways. For instance, TGFBR1 induces TRAF6 autoubiquitination which in turn results in MAP3K7 ubiquitination and activation to trigger apoptosis. Also regulates epithelial to mesenchymal transition through a SMAD-independent signaling pathway through PARD6A phosphorylation and activation. This chain is TGF-beta receptor type-1 (Tgfbr1), found in Mus musculus (Mouse).